Reading from the N-terminus, the 173-residue chain is Alpha-crystallin A chain (173 aa).

An N-acetylmethionine modification is found at M1. Positions 1–63 (MDVTIQHPWF…RTVLDSGISE (63 aa)) are required for complex formation with BFSP1 and BFSP2. Q6 is subject to Deamidated glutamine; partial. Residue S45 is modified to Phosphoserine. At Q50 the chain carries Deamidated glutamine; partial. In terms of domain architecture, sHSP spans 52 to 162 (LFRTVLDSGI…SHSERAIPVS (111 aa)). Position 99 is an N6-acetyllysine (K99). Residue H100 participates in Zn(2+) binding. N101 carries the deamidated asparagine; partial modification. Residues E102 and H107 each contribute to the Zn(2+) site. S122 bears the Phosphoserine mark. Deamidated asparagine; partial is present on N123. A disulfide bridge connects residues C131 and C142. At Q147 the chain carries Deamidated glutamine; partial. Positions 147 to 173 (QSGMDASHSERAIPVSREEKPSSAPSS) are disordered. Positions 153–167 (SHSERAIPVSREEKP) are enriched in basic and acidic residues. A Zn(2+)-binding site is contributed by H154. Residue S162 is glycosylated (O-linked (GlcNAc) serine).

The protein belongs to the small heat shock protein (HSP20) family. In terms of assembly, heteromer composed of three CRYAA and one CRYAB subunits. Inter-subunit bridging via zinc ions enhances stability, which is crucial as there is no protein turn over in the lens. Can also form homodimers and homotetramers (dimers of dimers) which serve as the building blocks of homooligomers. Within homooligomers, the zinc-binding motif is created from residues of 3 different molecules. His-100 and Glu-102 from one molecule are ligands of the zinc ion, and His-107 and His-154 residues from additional molecules complete the site with tetrahedral coordination geometry. Part of a complex required for lens intermediate filament formation composed of BFSP1, BFSP2 and CRYAA. Undergoes age-dependent proteolytical cleavage at the C-terminus.

The protein localises to the cytoplasm. The protein resides in the nucleus. Its function is as follows. Contributes to the transparency and refractive index of the lens. In its oxidized form (absence of intramolecular disulfide bond), acts as a chaperone, preventing aggregation of various proteins under a wide range of stress conditions. Required for the correct formation of lens intermediate filaments as part of a complex composed of BFSP1, BFSP2 and CRYAA. The chain is Alpha-crystallin A chain (CRYAA) from Procavia capensis (Rock hyrax).